The primary structure comprises 127 residues: Probable soluble cytochrome b562 1 (127 aa).

The N-terminal stretch at 1-21 (MRKIPIIAGVFSLLITSCTFA) is a signal peptide. The heme b site is built by M28 and H123.

The protein belongs to the cytochrome b562 family. Heme b is required as a cofactor.

It localises to the periplasm. Its function is as follows. Electron-transport protein of unknown function. The polypeptide is Probable soluble cytochrome b562 1 (cybC1) (Yersinia pestis).